We begin with the raw amino-acid sequence, 568 residues long: MAGLESKVSDMKIKSDVVFYIDEASGNDETGNGSQTSPFKTAIHALETDANCTIFVKKNGSEEFEPITTNALKKAKKGVEQAAKKKAKAAEAEAAAAARAAAAKEAEAKRLEAAKNIVLKEPKDAPAAKKIAIIDSTNFRDSRVRVNGWVHRMRTQKGIIFIILRDGTGFLQCVLSGKVYDRASYDFINLGPESTVCLYGVIKELPEGKSAPGNHELVVDYYQILHAAPTGEEAFTNRLNAEAEPSYLLDQRHLVIRGETASSVLKVRARALRAMRDTFENLKMTEVTPPCMVQTQVEGGATLFKFNYYGQDAYLTQSSQLYLEAALPALGSVYTIQESFRAEKSLTRRHLSEFTHVEFELPFVNFGEFLEIIEEFICQTIDRLLDDPIATPLIKQLNPDFVKPSRPFMRLSYEDAIKYLNEHNILTPEGEQHKFGDDIAEAAERKMTDQINRPIFLTYFPLEIKSFYMKRVVDRPELTESVDCLMPNVGEIVGGSMRISDIQELLAAYKREGIDPAPYYWFTEQRKYGTTEHGGCGLGLERFLAWLCDRYTVRECCLFPRFTERCTP.

This sequence belongs to the class-II aminoacyl-tRNA synthetase family.

Its subcellular location is the cytoplasm. The enzyme catalyses tRNA(Asn) + L-asparagine + ATP = L-asparaginyl-tRNA(Asn) + AMP + diphosphate + H(+). In terms of biological role, cytosolic asparaginyl-tRNA synthetase which catalyzes the specific attachment of asparagine to its cognate tRNA. This Schizosaccharomyces pombe (strain 972 / ATCC 24843) (Fission yeast) protein is Probable asparagine--tRNA ligase, cytoplasmic (nrs1).